A 503-amino-acid polypeptide reads, in one-letter code: Glycerol kinase (503 aa).

T14 contacts ADP. ATP contacts are provided by T14, T15, and S16. Residue T14 participates in sn-glycerol 3-phosphate binding. R18 provides a ligand contact to ADP. The sn-glycerol 3-phosphate site is built by R84, E85, Y136, and D246. Positions 84, 85, 136, 246, and 247 each coordinate glycerol. T268 and G311 together coordinate ADP. T268, G311, Q315, and G412 together coordinate ATP. ADP is bound by residues G412 and N416. Residues 468–481 (ERTFSPDSDNEKRE) are compositionally biased toward basic and acidic residues. A disordered region spans residues 468–489 (ERTFSPDSDNEKRERRYKGWKK).

The protein belongs to the FGGY kinase family.

The enzyme catalyses glycerol + ATP = sn-glycerol 3-phosphate + ADP + H(+). It participates in polyol metabolism; glycerol degradation via glycerol kinase pathway; sn-glycerol 3-phosphate from glycerol: step 1/1. With respect to regulation, inhibited by fructose 1,6-bisphosphate (FBP). In terms of biological role, key enzyme in the regulation of glycerol uptake and metabolism. Catalyzes the phosphorylation of glycerol to yield sn-glycerol 3-phosphate. This Haemophilus influenzae (strain ATCC 51907 / DSM 11121 / KW20 / Rd) protein is Glycerol kinase.